Reading from the N-terminus, the 762-residue chain is Multifunctional tryptophan biosynthesis protein (762 aa).

The region spanning 25–224 (NLILIDNYDS…LHMQGGTWAE (200 aa)) is the Glutamine amidotransferase type-1 domain. 76 to 78 (GPG) is an L-glutamine binding site. Cysteine 104 acts as the Nucleophile; for GATase activity in catalysis. L-glutamine-binding positions include glutamine 108 and 154–155 (SL). Catalysis depends on for GATase activity residues histidine 198 and glutamate 200. Residues 251–515 (ILQKIYAHRK…DATQFIRELC (265 aa)) form an indole-3-glycerol phosphate synthase region. The N-(5'-phosphoribosyl)anthranilate isomerase stretch occupies residues 531–762 (LVKICGTRSA…EFVKAAKSVR (232 aa)).

As to quaternary structure, tetramer of two components I and two components II.

The catalysed reaction is chorismate + L-glutamine = anthranilate + pyruvate + L-glutamate + H(+). It carries out the reaction N-(5-phospho-beta-D-ribosyl)anthranilate = 1-(2-carboxyphenylamino)-1-deoxy-D-ribulose 5-phosphate. It catalyses the reaction 1-(2-carboxyphenylamino)-1-deoxy-D-ribulose 5-phosphate + H(+) = (1S,2R)-1-C-(indol-3-yl)glycerol 3-phosphate + CO2 + H2O. It participates in amino-acid biosynthesis; L-tryptophan biosynthesis; L-tryptophan from chorismate: step 1/5. The protein operates within amino-acid biosynthesis; L-tryptophan biosynthesis; L-tryptophan from chorismate: step 3/5. It functions in the pathway amino-acid biosynthesis; L-tryptophan biosynthesis; L-tryptophan from chorismate: step 4/5. Trifunctional enzyme bearing the Gln amidotransferase (GATase) domain of anthranilate synthase, indole-glycerolphosphate synthase, and phosphoribosylanthranilate isomerase activities. This is Multifunctional tryptophan biosynthesis protein (trp-1) from Neurospora crassa (strain ATCC 24698 / 74-OR23-1A / CBS 708.71 / DSM 1257 / FGSC 987).